The sequence spans 242 residues: 1-(5-phosphoribosyl)-5-[(5-phosphoribosylamino)methylideneamino] imidazole-4-carboxamide isomerase (242 aa).

Aspartate 10 functions as the Proton acceptor in the catalytic mechanism. Aspartate 131 (proton donor) is an active-site residue.

It belongs to the HisA/HisF family.

It localises to the cytoplasm. It catalyses the reaction 1-(5-phospho-beta-D-ribosyl)-5-[(5-phospho-beta-D-ribosylamino)methylideneamino]imidazole-4-carboxamide = 5-[(5-phospho-1-deoxy-D-ribulos-1-ylimino)methylamino]-1-(5-phospho-beta-D-ribosyl)imidazole-4-carboxamide. The protein operates within amino-acid biosynthesis; L-histidine biosynthesis; L-histidine from 5-phospho-alpha-D-ribose 1-diphosphate: step 4/9. The sequence is that of 1-(5-phosphoribosyl)-5-[(5-phosphoribosylamino)methylideneamino] imidazole-4-carboxamide isomerase from Bifidobacterium animalis subsp. lactis (strain AD011).